We begin with the raw amino-acid sequence, 787 residues long: ISWI one complex protein 3 (787 aa).

Residues 1 to 22 (MDSPSNSIQNLQQEAQGSSSAQ) are compositionally biased toward polar residues. 3 disordered regions span residues 1–137 (MDSP…AHEQ), 672–693 (ILEQ…LPKD), and 749–787 (TEYD…RQRT). The span at 40-50 (DQSVSVSQSSD) shows a compositional bias: low complexity. Positions 79-92 (KPKRKRPAPPKKKA) are enriched in basic residues. Basic and acidic residues predominate over residues 100-137 (SNDKVEKKKTTSIAKDGKPTLKTNDKKVAPKPKPAHEQ). Residues 675 to 689 (QKSTTDNNPSINTNP) are compositionally biased toward polar residues. The span at 751–777 (YDSEEYVDDEEDDEADIYDDNDNDSSF) shows a compositional bias: acidic residues. Positions 778 to 787 (DDGRVKRQRT) are enriched in basic and acidic residues.

Component of the ISW1A complex, which at least consists of ISW1 and IOC3.

It is found in the nucleus. Functionally, functions as a component of the ISW1A complex, which acts in remodeling the chromatin by catalyzing an ATP-dependent alteration in the structure of nucleosomal DNA. The ISW1A complex represses gene expression at initiation through specific positioning of a promoter proximal dinucleosome. The polypeptide is ISWI one complex protein 3 (IOC3) (Saccharomyces cerevisiae (strain ATCC 204508 / S288c) (Baker's yeast)).